Consider the following 2364-residue polypeptide: Cytotoxin-L (2364 aa).

Residues Met1–Leu91 are four-helical bundle. In terms of domain architecture, GT44 spans Lys96–Leu468. Residues Lys96–Leu468 are glucosyltransferase region. UDP-alpha-D-glucose contacts are provided by residues Ile101–Ile103, Asn139, Leu265–Asp270, and Asp286–Asp288. The Mg(2+) site is built by Asp288, Glu515, and Ser518. A UDP-alpha-D-glucose-binding site is contributed by Ser518–Trp520. An autoprocessing region region spans residues Gly544–Thr799. Residues Glu545 and Asp546 each coordinate Zn(2+). The Peptidase C80 domain maps to Leu567–Ser774. Residues Tyr577, Lys600, and Lys647 each contribute to the 1D-myo-inositol hexakisphosphate site. His653 provides a ligand contact to Zn(2+). The active-site For protease activity is His653. Cys698 serves as the catalytic Nucleophile; for protease activity. His757 lines the Zn(2+) pocket. Residues Lys764, Lys775, and Lys792 each contribute to the 1D-myo-inositol hexakisphosphate site. Residues Leu800 to Pro1500 form a translocation region region. Interaction with host SEMA6A and SEMA6B stretches follow at residues Cys1433–Glu1438, Asp1466–Tyr1471, Phe1484–Arg1495, Asn1504–Lys1511, and Tyr1596–Pro1601. Cell wall-binding repeat units lie at residues Glu1813–Met1832, Val1833–Asn1852, Ile1854–Gly1873, Ser1876–Leu1895, Phe1926–Ala1945, Ala1946–Glu1965, Leu1967–Met1986, Gln1987–Met2006, Gln2007–Arg2026, Tyr2057–Ala2076, Val2077–Glu2097, Cys2099–Arg2118, Gln2119–Ile2138, Glu2139–Val2158, Glu2209–Pro2224, Lys2227–Met2249, Arg2250–Met2269, Gln2270–Met2289, Tyr2320–Ala2339, and Ala2340–Glu2359. Positions Gly1835–Glu2364 are receptor-binding (CROPS) region.

The protein belongs to the clostridial glucosylating toxin (LCGT) family. Homomultimer; forms an inactive homomultimer at pH 8, which dissociates at pH 4, leading to cytotoxicity. Interacts with host SEMA6A; interaction promotes toxin entry into host cell. Interacts with host SEMA6B; interaction promotes toxin entry into host cell. Requires Zn(2+) as cofactor. Mn(2+) serves as cofactor. It depends on Mg(2+) as a cofactor. Undergoes autocatalytic cleavage to release the N-terminal part (Glucosyltransferase TcsL), which constitutes the active part of the toxin, in the host cytosol. 1D-myo-inositol hexakisphosphate-binding (InsP6) activates the peptidase C80 domain and promotes autoprocessing.

It localises to the secreted. It is found in the host endosome membrane. The protein resides in the host cytoplasm. The protein localises to the host cytosol. Its subcellular location is the host cell membrane. It catalyses the reaction L-threonyl-[protein] + UDP-alpha-D-glucose = 3-O-(alpha-D-glucosyl)-L-threonyl-[protein] + UDP + H(+). Protease activity is activated upon binding to 1D-myo-inositol hexakisphosphate (InsP6), which induces conformational reorganization. Its function is as follows. Precursor of a cytotoxin that targets the vascular endothelium, inducing an anti-inflammatory effect and resulting in lethal toxic shock syndrome. TcsL constitutes the main toxin that mediates the pathology of P.sordellii infection, an anaerobic Gram-positive bacterium found in soil and in the gastrointestinal and vaginal tracts of animals and humans; although the majority of carriers are asymptomatic, pathogenic P.sordellii infections arise rapidly and are highly lethal. This form constitutes the precursor of the toxin: it enters into host cells and mediates autoprocessing to release the active toxin (Glucosyltransferase TcsL) into the host cytosol. Targets vascular endothelium by binding to the semaphorin proteins SEMA6A and SEMA6B, and enters host cells via clathrin-mediated endocytosis. Once entered into host cells, acidification in the endosome promotes the membrane insertion of the translocation region and formation of a pore, leading to translocation of the GT44 and peptidase C80 domains across the endosomal membrane. This activates the peptidase C80 domain and autocatalytic processing, releasing the N-terminal part (Glucosyltransferase TcsL), which constitutes the active part of the toxin, in the cytosol. Functionally, active form of the toxin, which is released into the host cytosol following autoprocessing and inactivates small GTPases. Acts by mediating monoglucosylation of small GTPases of the Ras (H-Ras/HRAS, K-Ras/KRAS and N-Ras/NRAS) family in host cells at the conserved threonine residue located in the switch I region ('Thr-37/35'), using UDP-alpha-D-glucose as the sugar donor. Also able to catalyze monoglucosylation of some members of the Rho family (Rac1 and Rap2A), but with less efficiency than with Ras proteins. Monoglucosylation of host small GTPases completely prevents the recognition of the downstream effector, blocking the GTPases in their inactive form and leading to apoptosis. Induces an anti-inflammatory effect, mainly by inactivating Ras proteins which results in blockage of the cell cycle and killing of immune cells. The absence or moderate local inflammatory response allows C.sordellii spreading in deep tissues, production of toxin which is released in the general circulation and causes a toxic shock syndrome. The sequence is that of Cytotoxin-L from Paraclostridium sordellii (strain ATCC 9714 / DSM 2141 / JCM 3814 / LMG 15708 / NCIMB 10717 / 211) (Clostridium sordellii).